The chain runs to 811 residues: Probable inorganic carbon transporter subunit DabA (811 aa).

Residues Cys336, Asp338, His498, and Cys513 each coordinate Zn(2+).

This sequence belongs to the inorganic carbon transporter (TC 9.A.2) DabA family. In terms of assembly, forms a complex with DabB. It depends on Zn(2+) as a cofactor.

It is found in the cell inner membrane. Its function is as follows. Part of an energy-coupled inorganic carbon pump. The protein is Probable inorganic carbon transporter subunit DabA of Rhodospirillum centenum (strain ATCC 51521 / SW).